Here is a 524-residue protein sequence, read N- to C-terminus: Bifunctional NAD(P)H-hydrate repair enzyme Nnr (524 aa).

The tract at residues 1–223 is NAD(P)H-hydrate epimerase; that stretch reads MAVTSPWFRA…QAIANVLGEV (223 aa). Residues 17-217 enclose the YjeF N-terminal domain; that stretch reads MQEIENWLFT…GIGLPPQAIA (201 aa). Residues 66–70 form an NADPHX 1; for epimerase activity region; the sequence is HNGGD. Residues N67 and D127 each contribute to the K(+) site. The NADPHX 1; for epimerase activity stretch occupies residues 131 to 137; sequence GVGLTRL. (6S)-NADPHX is bound at residue D160. S163 is a binding site for K(+). Positions 231–508 constitute a YjeF C-terminal domain; it reads ADQAQQTLPL…EYLIPACRQW (278 aa). The tract at residues 231–524 is ADP-dependent (S)-NAD(P)H-hydrate dehydratase; the sequence is ADQAQQTLPL…NWPANLSHSS (294 aa). G333 is a (6S)-NADPHX binding site. Residues 383–389 are NADPHX 2; for dehydratase activity; sequence HGGEFKR. ADP contacts are provided by residues 417–421 and 437–446; these read KGAKT and TPALARGGSG. A (6S)-NADPHX-binding site is contributed by D447.

It in the N-terminal section; belongs to the NnrE/AIBP family. This sequence in the C-terminal section; belongs to the NnrD/CARKD family. K(+) is required as a cofactor.

The catalysed reaction is (6S)-NADHX + ADP = AMP + phosphate + NADH + H(+). It carries out the reaction (6S)-NADPHX + ADP = AMP + phosphate + NADPH + H(+). The enzyme catalyses (6R)-NADHX = (6S)-NADHX. It catalyses the reaction (6R)-NADPHX = (6S)-NADPHX. Bifunctional enzyme that catalyzes the epimerization of the S- and R-forms of NAD(P)HX and the dehydration of the S-form of NAD(P)HX at the expense of ADP, which is converted to AMP. This allows the repair of both epimers of NAD(P)HX, a damaged form of NAD(P)H that is a result of enzymatic or heat-dependent hydration. The protein is Bifunctional NAD(P)H-hydrate repair enzyme Nnr (nnr) of Synechocystis sp. (strain ATCC 27184 / PCC 6803 / Kazusa).